The chain runs to 243 residues: Putative outer membrane protein RP075 (243 aa).

An N-terminal signal peptide occupies residues Met1–Ala23.

This sequence belongs to the OmpW/AlkL family.

It is found in the cell outer membrane. In Rickettsia prowazekii (strain Madrid E), this protein is Putative outer membrane protein RP075.